The primary structure comprises 571 residues: Glutamate--tRNA ligase (571 aa).

A 'HIGH' region motif is present at residues 110 to 120; it reads PNPNGPATLGS.

It belongs to the class-I aminoacyl-tRNA synthetase family. Glutamate--tRNA ligase type 2 subfamily.

Its subcellular location is the cytoplasm. The enzyme catalyses tRNA(Glu) + L-glutamate + ATP = L-glutamyl-tRNA(Glu) + AMP + diphosphate. In terms of biological role, catalyzes the attachment of glutamate to tRNA(Glu) in a two-step reaction: glutamate is first activated by ATP to form Glu-AMP and then transferred to the acceptor end of tRNA(Glu). The protein is Glutamate--tRNA ligase of Methanosarcina mazei (strain ATCC BAA-159 / DSM 3647 / Goe1 / Go1 / JCM 11833 / OCM 88) (Methanosarcina frisia).